The sequence spans 564 residues: Phosphoinositide phospholipase C 3 (564 aa).

Positions 19–54 constitute an EF-hand domain; it reads TRQPPVSIKRLFEAYSRNGKMSFDELLRFVSEVQGE. A PI-PLC X-box domain is found at 106–250; the sequence is HDMKAPLSHY…LKGKILISTK (145 aa). Catalysis depends on residues H121 and H167. In terms of domain architecture, PI-PLC Y-box spans 296–412; it reads RDLIAIHAAN…GYVKKPRILL (117 aa). Positions 406-539 constitute a C2 domain; sequence KKPRILLDEH…KSGVRAVRLH (134 aa). Positions 450, 456, 509, 511, and 517 each coordinate Ca(2+).

Requires Ca(2+) as cofactor. In terms of tissue distribution, expressed in leaves, roots and siliques, but not in flowers.

It localises to the cell membrane. The catalysed reaction is a 1,2-diacyl-sn-glycero-3-phospho-(1D-myo-inositol-4,5-bisphosphate) + H2O = 1D-myo-inositol 1,4,5-trisphosphate + a 1,2-diacyl-sn-glycerol + H(+). Its function is as follows. The production of the second messenger molecules diacylglycerol (DAG) and inositol 1,4,5-trisphosphate (IP3) is mediated by activated phosphatidylinositol-specific phospholipase C enzymes. The protein is Phosphoinositide phospholipase C 3 (PLC3) of Arabidopsis thaliana (Mouse-ear cress).